Reading from the N-terminus, the 323-residue chain is MSDGAAARRWGKCGHSCSRESIMVAFKGVWTQAFWKAVSAEFLATLIFVLLGVGSTINWGGSENPLPVDMVLISLCFGLSIATMVQCFGHISGGHINPAVTVAMVCTRKISIAKSVFYIIAQCLGAIIGAGILYLVTPPSVVGGLGVTTVHGNLTAGHGLLVELIITFQLVFTIFASCDSKRTDVTGSIALAIGFSVAIGHLFAINYTGASMNPARSFGPAVIMGNWANHWIYWVGPIMGAVLAGALYEYVFCPDVELKRRLKEAFSKAAQQTKGSYMEVEDNRSQVETEDLILKPGVVHVIDIDRGEEKKGKDSSGEVLSSV.

Residues 1 to 36 (MSDGAAARRWGKCGHSCSRESIMVAFKGVWTQAFWK) are Cytoplasmic-facing. S-palmitoyl cysteine attachment occurs at residues cysteine 13 and cysteine 17. The chain crosses the membrane as a helical span at residues 37–57 (AVSAEFLATLIFVLLGVGSTI). Topologically, residues 58–69 (NWGGSENPLPVD) are extracellular. Residues 70-89 (MVLISLCFGLSIATMVQCFG) traverse the membrane as a helical segment. The Cytoplasmic segment spans residues 90 to 93 (HISG). The segment at residues 94–101 (GHINPAVT) is an intramembrane region (discontinuously helical). Residues 97–99 (NPA) carry the NPA 1 motif. Topologically, residues 102–115 (VAMVCTRKISIAKS) are cytoplasmic. A Phosphoserine; by PKG modification is found at serine 111. A helical membrane pass occupies residues 116-136 (VFYIIAQCLGAIIGAGILYLV). At 137–155 (TPPSVVGGLGVTTVHGNLT) the chain is on the extracellular side. An N-linked (GlcNAc...) asparagine glycan is attached at asparagine 153. The chain crosses the membrane as a helical span at residues 156–176 (AGHGLLVELIITFQLVFTIFA). Residues 177–184 (SCDSKRTD) lie on the Cytoplasmic side of the membrane. Serine 180 carries the post-translational modification Phosphoserine; by PKC. A helical transmembrane segment spans residues 185-205 (VTGSIALAIGFSVAIGHLFAI). Asparagine 206 carries an N-linked (GlcNAc...) asparagine glycan. The Extracellular portion of the chain corresponds to 206-208 (NYT). The segment at residues 209-222 (GASMNPARSFGPAV) is an intramembrane region (discontinuously helical). The NPA 2 motif lies at 213 to 215 (NPA). Over 223 to 231 (IMGNWANHW) the chain is Extracellular. A helical membrane pass occupies residues 232–252 (IYWVGPIMGAVLAGALYEYVF). The Cytoplasmic portion of the chain corresponds to 253–323 (CPDVELKRRL…DSSGEVLSSV (71 aa)). A phosphoserine mark is found at serine 276 and serine 285. At threonine 289 the chain carries Phosphothreonine. A Phosphoserine modification is found at serine 321.

The protein belongs to the MIP/aquaporin (TC 1.A.8) family. Homotetramer. The tetramers can form oligomeric arrays in membranes. The size of the oligomers differs between tissues and is smaller in skeletal muscle than in brain. Interaction between AQP4 oligomeric arrays in close-by cells can contribute to cell-cell adhesion. Part of a complex containing MLC1, TRPV4, HEPACAM and ATP1B1. In terms of processing, phosphorylation by PKC at Ser-180 reduces conductance by 50%. Phosphorylation by PKG at Ser-111 in response to glutamate increases conductance by 40%; this increase is not due to increased presence at the cell membrane. Isoform 2: Palmitoylated on its N-terminal region. Isoform 1: Not palmitoylated. As to expression, detected in brain cortex, especially around cortical blood vessels, and subjacent to pia, with lower levels in parenchymal membranes. Detected in ependymal and astroglial cells in brain. Detected in supporting Hensen's cells, inner sulcus cells and Claudius cells in the inner ear. Detected in skeletal muscle. Detected in gastric parietal cells. Detected in principal cells in collecting ducts in kidney medulla (at protein level). Detected in brain, heart and skeletal muscle.

It localises to the cell membrane. It is found in the basolateral cell membrane. The protein resides in the endosome membrane. The protein localises to the sarcolemma. Its subcellular location is the cell projection. The catalysed reaction is H2O(in) = H2O(out). In terms of biological role, forms a water-specific channel. Plays an important role in brain water homeostasis and in glymphatic solute transport. Required for a normal rate of water exchange across the blood brain interface. Required for normal levels of cerebrospinal fluid influx into the brain cortex and parenchyma along paravascular spaces that surround penetrating arteries, and for normal drainage of interstitial fluid along paravenous drainage pathways. Thereby, it is required for normal clearance of solutes from the brain interstitial fluid, including soluble beta-amyloid peptides derived from APP. Plays a redundant role in urinary water homeostasis and urinary concentrating ability. The protein is Aquaporin-4 (Aqp4) of Mus musculus (Mouse).